The sequence spans 287 residues: Intermediate filament family orphan 2 (287 aa).

The IF rod domain maps to 1-254 (MNLQTMVDTL…RLIKGSADRN (254 aa)). The tract at residues 248–287 (KGSADRNSPSPSSVASSDSGSTDEIQDDLEREADVEPMVS) is disordered. The span at 255–267 (SPSPSSVASSDSG) shows a compositional bias: low complexity. Over residues 271–287 (EIQDDLEREADVEPMVS) the composition is skewed to acidic residues.

The protein belongs to the intermediate filament family.

The protein is Intermediate filament family orphan 2 (Iffo2) of Rattus norvegicus (Rat).